The sequence spans 368 residues: Galactoside 2-alpha-L-fucosyltransferase SEC1 (368 aa).

The tract at residues 1–20 is disordered; that stretch reads MWDMRAVAPQRPAAGHPRAG. Residues 1–31 are Cytoplasmic-facing; sequence MWDMRAVAPQRPAAGHPRAGWPRKLKTAATR. Residues 32–52 form a helical membrane-spanning segment; the sequence is FWATCPSSSTVCFLFVIFAVS. The Lumenal segment spans residues 53 to 368; it reads TVFHCHRRLA…NLGQARESHP (316 aa).

Belongs to the glycosyltransferase 11 family. Kidney.

Its subcellular location is the golgi apparatus. The protein localises to the golgi stack membrane. It carries out the reaction a ganglioside GM1 + GDP-beta-L-fucose = a ganglioside Fuc-GM1 + GDP + H(+). It functions in the pathway protein modification; protein glycosylation. Catalyzes the transfer of alpha 1,2-linked fucose to ganglioside GM1 and galacto-N-biose. This is Galactoside 2-alpha-L-fucosyltransferase SEC1 from Bos taurus (Bovine).